The following is a 546-amino-acid chain: MTPGELRRLYFIIHTFLSYGLDELIPKIRLTLPLRIWRRMLFWMPNRHQDQPLGTRLRLALQELGPVWIKFGQMLSTRRDLFPPHIADQLALLQDRVAPFEGKLAQQQIEKAMGGLPVDAWFDDFSVEPLASASIAQVHTARLKENGKEVVIKVIRPDILPIIKADMKLIYRLARWVPRLLPDGRRLRPQEVVREYEKTLLDELNLLRESANAIQLRRNFEDSPMLYVPEVYPDYCSESMMVMERIYGIPVSDVEALEAQGTNMQLLAERGVQVFFTQVFRDSFFHADMHPGNIFVSYEHPEDPQYIGIDCGIVGSLNKEDKRYLAENFIAFFNRDYRKVAELHVDSGWVPPDTNVEEFEFAIRTVCEPIFEKPLAEISFGHVLLNLFNTARRFNMEVQPQLVLLQKTLLYVEGVGRQLYPQLDLWKTAKPFLESWIKDQVGIPALVRAFKDKAPFWIERMPEIPELVYQSLQQSKQLQTSVDTIVRDMHVRHVRQGQSRYLFGIGAVLLLSGTLLFIHRPEWGMMPGWLMAGGVVTWLIGWRKTH.

The region spanning 124–502 is the Protein kinase domain; that stretch reads DFSVEPLASA…HVRQGQSRYL (379 aa). ATP is bound by residues 130–138 and Lys153; that span reads LASASIAQV. Asp288 functions as the Proton acceptor in the catalytic mechanism. 2 helical membrane-spanning segments follow: residues 501 to 521 and 522 to 542; these read YLFG…IHRP and EWGM…LIGW.

Belongs to the ABC1 family. UbiB subfamily.

Its subcellular location is the cell inner membrane. It participates in cofactor biosynthesis; ubiquinone biosynthesis [regulation]. Functionally, is probably a protein kinase regulator of UbiI activity which is involved in aerobic coenzyme Q (ubiquinone) biosynthesis. This Klebsiella pneumoniae (strain 342) protein is Probable protein kinase UbiB.